The sequence spans 593 residues: Dolichyl-phosphooligosaccharide-protein glycotransferase 2 (593 aa).

Topologically, residues 1–12 (MTPVGMDRKSLS) are cytoplasmic. Residues 13–33 (LLILIVLLGLCIRLQNFGEIF) form a helical membrane-spanning segment. Topologically, residues 34–98 (DSRIYYYGYD…GLFLGFWASE (65 aa)) are extracellular. Positions 41–43 (GYD) match the DXD motif 1 motif. Residue Asp-43 coordinates Mn(2+). A helical membrane pass occupies residues 99-119 (IFAVVFPVIIGVLCIVLVYLI). Residues 120 to 128 (SLEVLRNEK) are Cytoplasmic-facing. The chain crosses the membrane as a helical span at residues 129-149 (FALISAFIFSVCPVTVWKSLL). Residues 150 to 154 (GKADH) lie on the Extracellular side of the membrane. Asp-153 serves as a coordination point for Mn(2+). Residues 153–155 (DHH) carry the DXD motif 2 motif. His-154 is a binding site for a glycophospholipid. Mn(2+) is bound at residue His-155. A helical membrane pass occupies residues 155-175 (HIWVVFLLLLSIWLVTKPGLL). Topologically, residues 176–180 (KLLSG) are cytoplasmic. The chain crosses the membrane as a helical span at residues 181–201 (IPMLLMALSWLGAPIYAALLA). The Extracellular portion of the chain corresponds to 202 to 229 (VSSLFQFNEKEVRIVGISNLIPVLSSIQ). Residues 230-250 (NLFLGFSFLAIAVFLLVGSFV) form a helical membrane-spanning segment. Residues 251 to 265 (KRFERRFRYAIVYYL) lie on the Cytoplasmic side of the membrane. A helical membrane pass occupies residues 266–286 (CICSVALLSAYLMPVGWLGFV). The Extracellular portion of the chain corresponds to 287–310 (KSGISYVLGTDIYLPTIREARSFQ). The TIXE motif signature appears at 302-305 (TIRE). Residues 311–331 (ILGVISSAGYLFFVLAIPALF) form a helical membrane-spanning segment. Met-332 is a topological domain (cytoplasmic). The chain crosses the membrane as a helical span at residues 333-353 (LRNGFLKVFFVLSFLISILQL). Position 354 (Arg-354) is a topological domain, extracellular. An a glycophospholipid-binding site is contributed by Arg-354. Residues 355–375 (FVEVLAFPVAILASYTICQIL) form a helical membrane-spanning segment. Residues 376–411 (ERVDYPVFRKEEEGESKRRGRKEKKKAVEIRKKDHA) lie on the Cytoplasmic side of the membrane. Residues 412–432 (TVIAFLLFLALPCFANSLAPV) traverse the membrane as a helical segment. At 433 to 593 (EMTMDWKEAL…FGTVKIFEVK (161 aa)) the chain is on the extracellular side. Residues 468–470 (WWD) are interacts with target acceptor peptide in protein substrate. The short motif at 468 to 472 (WWDYG) is the WWDYG motif element. The short motif at 524 to 539 (ELTVKPETNKTKFIPI) is the DKi motif element.

The protein belongs to the STT3 family. Requires Mn(2+) as cofactor. The cofactor is Mg(2+). Zn(2+) serves as cofactor.

It is found in the cell membrane. The catalysed reaction is an archaeal dolichyl phosphooligosaccharide + [protein]-L-asparagine = an archaeal dolichyl phosphate + a glycoprotein with the oligosaccharide chain attached by N-beta-D-glycosyl linkage to a protein L-asparagine.. Its pathway is protein modification; protein glycosylation. Its function is as follows. Oligosaccharyl transferase (OST) that catalyzes the initial transfer of a defined glycan (a GalNAc-linked heptasaccharide composed of 4 Hex, 3 dHex and a sulfate for A.fulgidus AglB-S) from the lipid carrier dolichol-monophosphate to an asparagine residue within an Asn-X-Ser/Thr consensus motif in nascent polypeptide chains, the first step in protein N-glycosylation. The polypeptide is Dolichyl-phosphooligosaccharide-protein glycotransferase 2 (aglB2) (Archaeoglobus fulgidus (strain ATCC 49558 / DSM 4304 / JCM 9628 / NBRC 100126 / VC-16)).